A 1164-amino-acid chain; its full sequence is DNA-directed RNA polymerase 133 kDa polypeptide (1164 aa).

It belongs to the RNA polymerase beta chain family. As to quaternary structure, the DNA-dependent RNA polymerase used for intermediate and late genes expression consists of eight subunits 147 kDa, 133 kDa, 35 kDa, 30 kDa, 22 kDa, 19 kDa, 18 kDa and 7 kDa totalling more than 500 kDa in mass. The same holoenzyme, with the addition of the transcription-specificity factor RAP94, is used for early gene expression.

It localises to the virion. It catalyses the reaction RNA(n) + a ribonucleoside 5'-triphosphate = RNA(n+1) + diphosphate. In terms of biological role, part of the DNA-dependent RNA polymerase which catalyzes the transcription of viral DNA into RNA using the four ribonucleoside triphosphates as substrates. Responsible for the transcription of early, intermediate and late genes. DNA-dependent RNA polymerase associates with the early transcription factor (ETF), itself composed of OPG118 and OPG133, thereby allowing the early genes transcription. Late transcription, and probably also intermediate transcription, require newly synthesized RNA polymerase. This chain is DNA-directed RNA polymerase 133 kDa polypeptide (OPG151), found in Homo sapiens (Human).